The sequence spans 196 residues: RNA pyrophosphohydrolase (196 aa).

Positions 6–149 (GYRPNVGIVI…KRDVYRKVMK (144 aa)) constitute a Nudix hydrolase domain. The Nudix box motif lies at 38–59 (GGINDNESAEQAMYRELHEEVG).

Belongs to the Nudix hydrolase family. RppH subfamily. Requires a divalent metal cation as cofactor.

Accelerates the degradation of transcripts by removing pyrophosphate from the 5'-end of triphosphorylated RNA, leading to a more labile monophosphorylated state that can stimulate subsequent ribonuclease cleavage. This is RNA pyrophosphohydrolase from Haemophilus influenzae (strain ATCC 51907 / DSM 11121 / KW20 / Rd).